The primary structure comprises 244 residues: HTH-type transcriptional regulator RdgA (244 aa).

The 54-residue stretch at 9-62 (LKTARTAQGLSQKALGDMIGVSQAAIQKIEVGKASQTTKIVELSNNLRVRPEWL) folds into the HTH cro/C1-type domain. Positions 20-39 (QKALGDMIGVSQAAIQKIEV) form a DNA-binding region, H-T-H motif.

Functionally, regulates pectin lyase production in response to DNA damage. The protein is HTH-type transcriptional regulator RdgA (rdgA) of Pectobacterium carotovorum subsp. carotovorum (Erwinia carotovora subsp. carotovora).